We begin with the raw amino-acid sequence, 327 residues long: Malate dehydrogenase (327 aa).

An NAD(+)-binding site is contributed by 12–18 (GAAGQIG). Residues arginine 93 and arginine 99 each coordinate substrate. Residues asparagine 106, glutamine 113, and 130–132 (VGN) each bind NAD(+). Residues asparagine 132 and arginine 163 each contribute to the substrate site. Catalysis depends on histidine 188, which acts as the Proton acceptor.

It belongs to the LDH/MDH superfamily. MDH type 2 family.

It catalyses the reaction (S)-malate + NAD(+) = oxaloacetate + NADH + H(+). Functionally, catalyzes the reversible oxidation of malate to oxaloacetate. The protein is Malate dehydrogenase of Paraburkholderia phymatum (strain DSM 17167 / CIP 108236 / LMG 21445 / STM815) (Burkholderia phymatum).